We begin with the raw amino-acid sequence, 1139 residues long: Phospholipid-transporting ATPase tat-1 (1139 aa).

The next 3 membrane-spanning stretches (helical) occupy residues 78–98, 276–296, and 318–338; these read YTTAVPFLIILSVSALKEIFE, IIFLFFVLVALALISATGSEI, and SFLWGVLTFFILYNNLIPISL. Aspartate 388 serves as the catalytic 4-aspartylphosphate intermediate. Transmembrane regions (helical) follow at residues 831–851, 855–875, 901–921, 935–955, 972–992, and 1013–1033; these read ICLYIIELWFAMFSAWSGQTI, WTIGMFNVIFTAWPPVVLGLF, IGNFSLWIGLAIVHSLSLFFL, GLTGGWLMLGNCAYTFVVATV, VACIGSIGLWIVFVIVYSLVF, and YTFWLALLFIPLATLLWDLVI.

Belongs to the cation transport ATPase (P-type) (TC 3.A.3) family. Type IV subfamily.

It localises to the cell membrane. It is found in the early endosome membrane. Its subcellular location is the recycling endosome membrane. It carries out the reaction ATP + H2O + phospholipidSide 1 = ADP + phosphate + phospholipidSide 2.. The enzyme catalyses a 1,2-diacyl-sn-glycero-3-phospho-L-serine(out) + ATP + H2O = a 1,2-diacyl-sn-glycero-3-phospho-L-serine(in) + ADP + phosphate + H(+). Transports phosphatidylserine from the outer to the inner leaflet of the plasma membrane, thereby maintaining the enrichment of this phospholipid in the inner leaflet. Ectopic exposure of phosphatidylserine on the cell surface may result in removal of living cells by neighboring phagocytes. Regulation of the phosphatidylserine distribution in plasma membranes is likely to help in the maintenance and control of the membrane surface charge. Plays a role in the formation of the tubular membrane structure and in membrane trafficking and is specifically involved in the recycling and degradation of endocytic cargo, likely with its chaperone protein chat-1. In Caenorhabditis elegans, this protein is Phospholipid-transporting ATPase tat-1 (tat-1).